The chain runs to 193 residues: Serine recombinase gin (193 aa).

The Resolvase/invertase-type recombinase catalytic domain maps to 1–134 (MLIGYVRVST…AGLAAARNKG (134 aa)). Serine 9 acts as the O-(5'-phospho-DNA)-serine intermediate in catalysis. Positions 138-183 (GRPPKLTKAEWEQAGRLLAQGIPRKQVALIYDVALSTLYKKHPAKR) form a DNA-binding region, H-T-H motif.

It belongs to the site-specific recombinase resolvase family. Homodimer. During inversion, two dimers associate to form a homotetramer.

The protein localises to the host cytoplasm. Its function is as follows. Performs inversion of a viral 3 kp segment (G-segment) that encodes two alternate pairs of tail fiber proteins thereby modifying the host specificity of the virus. Binds as a dimer to the viral gix sites which are 34-bp palindromic sequences that flank the invertible G-segment. Catalyzes site-specific recombination in the presence of the host factor Fis. Gin dimers bound to each of the gix sites and host factor Fis bound to the enhancer come together to form the synaptic complex. Each Gin monomer introduces a nick and becomes covalently attached to the 5'-phosphate of the DNA, resulting in double-stranded staggered breaks at both recombination sites. A 180 degrees rotation of one of the two Gin dimers followed by religation of the DNA leads to the inversion of the G-segment (G+ or G- orientation). This Escherichia phage Mu (Bacteriophage Mu) protein is Serine recombinase gin (gin).